The primary structure comprises 742 residues: Clamp-binding protein CrfC (742 aa).

The tract at residues 41–45 (QLALP) is clamp-binding consensus. Residues 66-402 (SRLEMVLAIV…LWEDSLFAQP (337 aa)) enclose the Dynamin-type G domain. Positions 76-83 (GTMKAGKS) are G1 motif. Residues 102 to 104 (MTA) are G2 motif. The tract at residues 236–239 (DTPG) is G3 motif. Residues 297–300 (NKFD) are G4 motif. Residues 331-334 (FPVS) form a G5 motif region. Residues 440–472 (RAHGLNVACEQLRQNIHQIEESLQLLQLNQAQV) adopt a coiled-coil conformation.

This sequence belongs to the TRAFAC class dynamin-like GTPase superfamily. Dynamin/Fzo/YdjA family. As to quaternary structure, forms homooligomers. Binds to the beta sliding clamp processivity factor (DnaN) in the presence and absence of DNA, may bind to the clamp itself as homodimers or trimers. Homooligomers may be able to bind more than 1 clamp complex.

The protein resides in the cytoplasm. Important for the colocalization of sister nascent DNA strands after replication fork passage during DNA replication, and for positioning and subsequent partitioning of sister chromosomes. Does not have GTPase activity on its own. In Escherichia coli (strain K12), this protein is Clamp-binding protein CrfC (crfC).